We begin with the raw amino-acid sequence, 209 residues long: NAD(P)H-quinone oxidoreductase subunit N, chloroplastic (209 aa).

A chloroplast-targeting transit peptide spans 1–45 (MGSRAICIQRVAPPCFEASQVKKIKTVGSFLVNTRSKRRRSTGVK).

This sequence belongs to the NDH complex subunit N family. As to quaternary structure, part of the chloroplast NDH complex, composed of a mixture of chloroplast and nucleus encoded subunits. Component of the NDH subcomplex A, at least composed of ndhH, ndhI, ndhJ, ndhK, ndhL, ndhM, ndhN and ndhO.

The protein localises to the plastid. The protein resides in the chloroplast thylakoid membrane. It carries out the reaction a plastoquinone + NADH + (n+1) H(+)(in) = a plastoquinol + NAD(+) + n H(+)(out). The catalysed reaction is a plastoquinone + NADPH + (n+1) H(+)(in) = a plastoquinol + NADP(+) + n H(+)(out). Functionally, NDH shuttles electrons from NAD(P)H:plastoquinone, via FMN and iron-sulfur (Fe-S) centers, to quinones in the photosynthetic chain and possibly in a chloroplast respiratory chain. The immediate electron acceptor for the enzyme in this species is believed to be plastoquinone. Couples the redox reaction to proton translocation, and thus conserves the redox energy in a proton gradient. This Arabidopsis thaliana (Mouse-ear cress) protein is NAD(P)H-quinone oxidoreductase subunit N, chloroplastic.